The chain runs to 307 residues: Coproporphyrin III ferrochelatase (307 aa).

Fe-coproporphyrin III contacts are provided by residues tyrosine 12, arginine 29, 45 to 46 (RY), serine 53, and tyrosine 124. Fe(2+) is bound by residues histidine 181 and glutamate 263.

It belongs to the ferrochelatase family.

It is found in the cytoplasm. The catalysed reaction is Fe-coproporphyrin III + 2 H(+) = coproporphyrin III + Fe(2+). The protein operates within porphyrin-containing compound metabolism; protoheme biosynthesis. In terms of biological role, involved in coproporphyrin-dependent heme b biosynthesis. Catalyzes the insertion of ferrous iron into coproporphyrin III to form Fe-coproporphyrin III. The sequence is that of Coproporphyrin III ferrochelatase from Staphylococcus epidermidis (strain ATCC 35984 / DSM 28319 / BCRC 17069 / CCUG 31568 / BM 3577 / RP62A).